A 289-amino-acid chain; its full sequence is 4-diphosphocytidyl-2-C-methyl-D-erythritol kinase (289 aa).

The active site involves Lys10. ATP is bound at residue 94 to 104 (PVAAGLAGGSS). Asp136 is a catalytic residue.

This sequence belongs to the GHMP kinase family. IspE subfamily.

It catalyses the reaction 4-CDP-2-C-methyl-D-erythritol + ATP = 4-CDP-2-C-methyl-D-erythritol 2-phosphate + ADP + H(+). It functions in the pathway isoprenoid biosynthesis; isopentenyl diphosphate biosynthesis via DXP pathway; isopentenyl diphosphate from 1-deoxy-D-xylulose 5-phosphate: step 3/6. Functionally, catalyzes the phosphorylation of the position 2 hydroxy group of 4-diphosphocytidyl-2C-methyl-D-erythritol. This chain is 4-diphosphocytidyl-2-C-methyl-D-erythritol kinase, found in Bacillus pumilus (strain SAFR-032).